Reading from the N-terminus, the 289-residue chain is Lipoyl synthase 2 (289 aa).

Residues cysteine 43, cysteine 48, cysteine 54, cysteine 69, cysteine 73, cysteine 76, and serine 282 each coordinate [4Fe-4S] cluster. The Radical SAM core domain occupies tyrosine 55–alanine 271.

The protein belongs to the radical SAM superfamily. Lipoyl synthase family. It depends on [4Fe-4S] cluster as a cofactor.

It localises to the cytoplasm. It carries out the reaction [[Fe-S] cluster scaffold protein carrying a second [4Fe-4S](2+) cluster] + N(6)-octanoyl-L-lysyl-[protein] + 2 oxidized [2Fe-2S]-[ferredoxin] + 2 S-adenosyl-L-methionine + 4 H(+) = [[Fe-S] cluster scaffold protein] + N(6)-[(R)-dihydrolipoyl]-L-lysyl-[protein] + 4 Fe(3+) + 2 hydrogen sulfide + 2 5'-deoxyadenosine + 2 L-methionine + 2 reduced [2Fe-2S]-[ferredoxin]. The protein operates within protein modification; protein lipoylation via endogenous pathway; protein N(6)-(lipoyl)lysine from octanoyl-[acyl-carrier-protein]: step 2/2. Catalyzes the radical-mediated insertion of two sulfur atoms into the C-6 and C-8 positions of the octanoyl moiety bound to the lipoyl domains of lipoate-dependent enzymes, thereby converting the octanoylated domains into lipoylated derivatives. This is Lipoyl synthase 2 from Gloeobacter violaceus (strain ATCC 29082 / PCC 7421).